The chain runs to 97 residues: RNA-binding protein Hfq (97 aa).

Residues 10–70 (DPFLNALRKE…ISTIVPARSV (61 aa)) form the Sm domain. Residues 74–97 (HENRPQAAPTSTLVQVETVQQPAE) are disordered. Residues 81–97 (APTSTLVQVETVQQPAE) show a composition bias toward polar residues.

This sequence belongs to the Hfq family. Homohexamer.

RNA chaperone that binds small regulatory RNA (sRNAs) and mRNAs to facilitate mRNA translational regulation in response to envelope stress, environmental stress and changes in metabolite concentrations. Also binds with high specificity to tRNAs. This chain is RNA-binding protein Hfq, found in Neisseria meningitidis serogroup A / serotype 4A (strain DSM 15465 / Z2491).